A 1227-amino-acid chain; its full sequence is Sterol 3-beta-glucosyltransferase (1227 aa).

Disordered regions lie at residues M1–P76 and Q104–K189. The segment covering K48–T57 has biased composition (basic and acidic residues). Over residues A114–D135 the composition is skewed to acidic residues. The segment covering E154–S171 has biased composition (basic and acidic residues). Residues T179–K189 show a composition bias toward basic residues. The region spanning S188–F229 is the GRAM 1 domain. Residues S239–F342 enclose the PH domain. Over residues D449–S469 the composition is skewed to low complexity. Disordered regions lie at residues D449–E484 and T523–R550. The GRAM 2 domain maps to K602–Q668. The UDP-alpha-D-glucose site is built by S786, R787, D789, N1060, N1088, V1089, H1091, H1104, S1107, G1108, T1109, D1128, and Q1129.

The protein belongs to the glycosyltransferase 28 family.

The protein resides in the cytoplasm. It is found in the membrane. The catalysed reaction is a sterol + UDP-alpha-D-glucose = a sterol 3-beta-D-glucoside + UDP + H(+). It catalyses the reaction ergosterol + UDP-alpha-D-glucose = ergosteryl 3-beta-D-glucoside + UDP + H(+). In terms of biological role, sterol glycosyltransferase responsible for the glycosylation of ergosterol to form ergosterol-glucoside. This is Sterol 3-beta-glucosyltransferase from Eremothecium gossypii (strain ATCC 10895 / CBS 109.51 / FGSC 9923 / NRRL Y-1056) (Yeast).